A 303-amino-acid polypeptide reads, in one-letter code: Recombination-associated protein RdgC (303 aa).

It belongs to the RdgC family.

It localises to the cytoplasm. The protein localises to the nucleoid. May be involved in recombination. In Enterobacter sp. (strain 638), this protein is Recombination-associated protein RdgC.